The chain runs to 609 residues: Polyadenylate-binding protein 7 (609 aa).

RRM domains are found at residues 24–102 (ASLY…WSVR), 112–189 (GNVF…KFMK), 201–278 (TNLY…RAQK), and 304–381 (SNIY…IAQK). The region spanning 509 to 586 (EMKKSIQQRQ…AFEVLKSSKT (78 aa)) is the PABC domain.

This sequence belongs to the polyadenylate-binding protein type-1 family. Expressed predominantly in siliques.

It is found in the cytoplasm. It localises to the nucleus. Its function is as follows. Binds the poly(A) tail of mRNA. Appears to be an important mediator of the multiple roles of the poly(A) tail in mRNA biogenesis, stability and translation. In Arabidopsis thaliana (Mouse-ear cress), this protein is Polyadenylate-binding protein 7 (PAB7).